The following is a 153-amino-acid chain: Cytochrome c oxidase subunit 5A, mitochondrial (153 aa).

A mitochondrion-targeting transit peptide spans 1–20 (MLRNTFTRAGGLSRITSVRF). The Mitochondrial matrix portion of the chain corresponds to 21-88 (AQTHALSNAA…EWGPRRPVLN (68 aa)). A helical membrane pass occupies residues 89–111 (KGDSSFIAKGVAAGLLFSVGLFA). At 112-153 (VVRMAGGQDAKTMNKEWQLKSDEYLKSKNANPWGGYSQVQSK) the chain is on the mitochondrial intermembrane side.

This sequence belongs to the cytochrome c oxidase IV family. Component of the cytochrome c oxidase (complex IV, CIV), a multisubunit enzyme composed of 12 subunits. The complex is composed of a catalytic core of 3 subunits COX1, COX2 and COX3, encoded in the mitochondrial DNA, and 9 supernumerary subunits COX4, COX5A (or COX5B), COX6, COX7, COX8, COX9, COX12, COX13 and COX26, which are encoded in the nuclear genome. COX5A is the predominant subunit V during aerobic/normoxic growth, it gets replaced by COX5B under anaerobic/hypoxic conditions. The complex exists as a monomer or a dimer and forms supercomplexes (SCs) in the inner mitochondrial membrane with a dimer of ubiquinol-cytochrome c oxidoreductase (cytochrome b-c1 complex, complex III, CIII), resulting in 2 different assemblies (supercomplexes III(2)IV and III(2)IV(2)). COX5A interacts with COR1, CYT1 and QCR6 at the CIII-CIV interface.

It localises to the mitochondrion inner membrane. It participates in energy metabolism; oxidative phosphorylation. Its function is as follows. Component of the cytochrome c oxidase, the last enzyme in the mitochondrial electron transport chain which drives oxidative phosphorylation. The respiratory chain contains 3 multisubunit complexes succinate dehydrogenase (complex II, CII), ubiquinol-cytochrome c oxidoreductase (cytochrome b-c1 complex, complex III, CIII) and cytochrome c oxidase (complex IV, CIV), that cooperate to transfer electrons derived from NADH and succinate to molecular oxygen, creating an electrochemical gradient over the inner membrane that drives transmembrane transport and the ATP synthase. Cytochrome c oxidase is the component of the respiratory chain that catalyzes the reduction of oxygen to water. Electrons originating from reduced cytochrome c in the intermembrane space (IMS) are transferred via the dinuclear copper A center (CU(A)) of COX2 and heme A of COX1 to the active site in COX1, a binuclear center (BNC) formed by heme A3 and copper B (CU(B)). The BNC reduces molecular oxygen to 2 water molecules using 4 electrons from cytochrome c in the IMS and 4 protons from the mitochondrial matrix. This Saccharomyces cerevisiae (strain ATCC 204508 / S288c) (Baker's yeast) protein is Cytochrome c oxidase subunit 5A, mitochondrial (COX5A).